The primary structure comprises 94 residues: MSRSAWKPPFCHPSILKSVNNALNKGFVNMAIKVHSRASVILPNCLGLKFAVYNGKDYIPVNVNDQNMIGHKFGEFSPTRKFTGHSGDKKATRR.

The protein belongs to the universal ribosomal protein uS19 family.

Its function is as follows. Protein S19 forms a complex with S13 that binds strongly to the 16S ribosomal RNA. This Wolbachia pipientis wMel protein is Small ribosomal subunit protein uS19.